Consider the following 461-residue polypeptide: Chromosomal replication initiator protein DnaA (461 aa).

Residues 1-90 form a domain I, interacts with DnaA modulators region; that stretch reads MAVSLWQQCI…RPSARPVAPA (90 aa). The interval 91–124 is domain II; that stretch reads PVAAKPVNRQTKAQVGTTSFNTQAEPIINPNHRS. The domain III, AAA+ region stretch occupies residues 125–341; the sequence is NINPTYQFDN…GALNRVIANA (217 aa). Gly-169, Gly-171, Lys-172, and Thr-173 together coordinate ATP. Residues 342 to 461 are domain IV, binds dsDNA; sequence NFTGRPITID…YANLIRTLSS (120 aa).

Belongs to the DnaA family. Oligomerizes as a right-handed, spiral filament on DNA at oriC.

The protein localises to the cytoplasm. In terms of biological role, plays an essential role in the initiation and regulation of chromosomal replication. ATP-DnaA binds to the origin of replication (oriC) to initiate formation of the DNA replication initiation complex once per cell cycle. Binds the DnaA box (a 9 base pair repeat at the origin) and separates the double-stranded (ds)DNA. Forms a right-handed helical filament on oriC DNA; dsDNA binds to the exterior of the filament while single-stranded (ss)DNA is stabiized in the filament's interior. The ATP-DnaA-oriC complex binds and stabilizes one strand of the AT-rich DNA unwinding element (DUE), permitting loading of DNA polymerase. After initiation quickly degrades to an ADP-DnaA complex that is not apt for DNA replication. Binds acidic phospholipids. In Shewanella frigidimarina (strain NCIMB 400), this protein is Chromosomal replication initiator protein DnaA.